We begin with the raw amino-acid sequence, 432 residues long: RNA binding protein fox-1 homolog 2 (432 aa).

A compositionally biased stretch (low complexity) spans 1 to 21 (MAEGGQAQQQPPQLGPGAAAR). A disordered region spans residues 1 to 169 (MAEGGQAQQQ…STPKRLHVSN (169 aa)). Composition is skewed to polar residues over residues 60–69 (QGNQEPTTTP) and 101–121 (YAGQ…PHGE). The span at 122–159 (QSSNSPSNQNGSLTQTEGGAQTDGQQSQTQSSENSESK) shows a compositional bias: low complexity. Positions 163–239 (KRLHVSNIPF…RKIEVNNATA (77 aa)) constitute an RRM domain. Position 323 is an omega-N-methylarginine (R323). An asymmetric dimethylarginine mark is found at R339 and R371. Asymmetric dimethylarginine; alternate is present on residues R423 and R428. Omega-N-methylarginine; alternate occurs at positions 423 and 428.

As to quaternary structure, interacts with ER-alpha N-terminal activation domain. Interacts with RBPMS; the interaction allows cooperative assembly of stable cell-specific alternative splicing regulatory complexes.

It localises to the nucleus. The protein resides in the cytoplasm. Its function is as follows. RNA-binding protein that regulates alternative splicing events by binding to 5'-UGCAUGU-3' elements. Prevents binding of U2AF2 to the 3'-splice site. Regulates alternative splicing of tissue-specific exons and of differentially spliced exons during erythropoiesis. Seems to act as a coregulatory factor of ER-alpha. Together with RNA binding proteins RBPMS and MBNL1/2, activates vascular smooth muscle cells alternative splicing events. The protein is RNA binding protein fox-1 homolog 2 (Rbfox2) of Rattus norvegicus (Rat).